Consider the following 1036-residue polypeptide: Isoleucine--tRNA ligase (1036 aa).

The 'HIGH' region signature appears at 46–56 (PFATGLPHYGH). A 'KMSKS' region motif is present at residues 589-593 (KMSKR). Lysine 592 is an ATP binding site.

The protein belongs to the class-I aminoacyl-tRNA synthetase family. IleS type 2 subfamily. As to quaternary structure, monomer. Zn(2+) serves as cofactor.

Its subcellular location is the cytoplasm. The catalysed reaction is tRNA(Ile) + L-isoleucine + ATP = L-isoleucyl-tRNA(Ile) + AMP + diphosphate. Its function is as follows. Catalyzes the attachment of isoleucine to tRNA(Ile). As IleRS can inadvertently accommodate and process structurally similar amino acids such as valine, to avoid such errors it has two additional distinct tRNA(Ile)-dependent editing activities. One activity is designated as 'pretransfer' editing and involves the hydrolysis of activated Val-AMP. The other activity is designated 'posttransfer' editing and involves deacylation of mischarged Val-tRNA(Ile). This Chlamydia trachomatis serovar L2 (strain ATCC VR-902B / DSM 19102 / 434/Bu) protein is Isoleucine--tRNA ligase.